Here is a 114-residue protein sequence, read N- to C-terminus: U10-agatoxin-Ao1a (114 aa).

The signal sequence occupies residues 1 to 15; sequence MCVATCLCTFAYVLA. The propeptide occupies 16–32; that stretch reads KSDEGENLISKVEETQR. 5 cysteine pairs are disulfide-bonded: cysteine 34-cysteine 53, cysteine 41-cysteine 59, cysteine 50-cysteine 86, cysteine 52-cysteine 76, and cysteine 61-cysteine 74. The disordered stretch occupies residues 95–114; the sequence is GSQNPSLCKDPNPRRRRHGK.

Belongs to the neurotoxin 04 (omega-agtx) family. 03 (type II/III omega-agtx) subfamily. Expressed by the venom gland.

Its subcellular location is the secreted. Its function is as follows. Inhibits voltage-gated calcium channels (Cav). In Agelena orientalis (Funnel-web spider), this protein is U10-agatoxin-Ao1a.